The following is an 872-amino-acid chain: Protein SEY1 (872 aa).

Topologically, residues 1–749 are cytoplasmic; sequence MVANGHFAGV…KRSAIGGITQ (749 aa). Positions 49 to 307 constitute a GB1/RHD3-type G domain; it reads GFNYHLISVF…IPADGFAVYA (259 aa). 59-66 lines the GTP pocket; the sequence is GSQSTGKS. A coiled-coil region spans residues 482-504; it reads SNYQQELSLYQKDLENIGGQLRR. The disordered stretch occupies residues 676–704; the sequence is LDKWIGHTPSSATPADEEDLTPIGGVDED. A compositionally biased stretch (acidic residues) spans 690-704; sequence ADEEDLTPIGGVDED. A helical transmembrane segment spans residues 750-770; it reads VPLYFYGLLLALGWNEIVAVL. Over 771 to 773 the chain is Lumenal; it reads RNP. A helical membrane pass occupies residues 774-794; it reads AYFLLLFVCAVTAYVTYQLNL. Residues 795-872 are Cytoplasmic-facing; sequence WGPIIKMTEA…IDDADDDDDF (78 aa). The interval 849 to 872 is disordered; that stretch reads NRKSAGGFQNNRSHIDDADDDDDF.

The protein belongs to the TRAFAC class dynamin-like GTPase superfamily. GB1/RHD3 GTPase family. RHD3 subfamily.

The protein localises to the endoplasmic reticulum membrane. Its function is as follows. Cooperates with the reticulon proteins and tubule-shaping DP1 family proteins to generate and maintain the structure of the tubular endoplasmic reticulum network. Has GTPase activity, which is required for its function in ER organization. The chain is Protein SEY1 from Paracoccidioides brasiliensis (strain Pb18).